The primary structure comprises 138 residues: Superoxide dismutase [Mn] (138 aa).

Residues His-2, His-49, Asp-133, and His-137 each coordinate Mn(2+).

The protein belongs to the iron/manganese superoxide dismutase family. It depends on Mn(2+) as a cofactor.

It carries out the reaction 2 superoxide + 2 H(+) = H2O2 + O2. Its function is as follows. Destroys superoxide anion radicals which are normally produced within the cells and which are toxic to biological systems. This chain is Superoxide dismutase [Mn] (sodA), found in Mycolicibacterium phlei (Mycobacterium phlei).